Consider the following 324-residue polypeptide: Acetyl-coenzyme A carboxylase carboxyl transferase subunit alpha (324 aa).

The 255-residue stretch at 37-291 folds into the CoA carboxyltransferase C-terminal domain; that stretch reads ILEEKLENLE…DLMIQKTFQQ (255 aa).

It belongs to the AccA family. In terms of assembly, acetyl-CoA carboxylase is a heterohexamer composed of biotin carboxyl carrier protein (AccB), biotin carboxylase (AccC) and two subunits each of ACCase subunit alpha (AccA) and ACCase subunit beta (AccD).

It localises to the cytoplasm. The enzyme catalyses N(6)-carboxybiotinyl-L-lysyl-[protein] + acetyl-CoA = N(6)-biotinyl-L-lysyl-[protein] + malonyl-CoA. Its pathway is lipid metabolism; malonyl-CoA biosynthesis; malonyl-CoA from acetyl-CoA: step 1/1. Component of the acetyl coenzyme A carboxylase (ACC) complex. First, biotin carboxylase catalyzes the carboxylation of biotin on its carrier protein (BCCP) and then the CO(2) group is transferred by the carboxyltransferase to acetyl-CoA to form malonyl-CoA. This Bacillus cereus (strain ATCC 14579 / DSM 31 / CCUG 7414 / JCM 2152 / NBRC 15305 / NCIMB 9373 / NCTC 2599 / NRRL B-3711) protein is Acetyl-coenzyme A carboxylase carboxyl transferase subunit alpha.